Consider the following 278-residue polypeptide: MANYTAADIKALRERTGAGMMDVKKALDEANGDAEKAIEIIRIKGLKGATKREGRSTAEGLVAAKVSNGVGVMIEVNCETDFVAKADKFIQLADKVLAVAVESGAADLETLLATDVDGKPLSEVVIEEGAVLGEKVVVRRISRIEGATVDAYLHKTSKDLPAQVGVLFAVDGESEAAATAAHDVAVHIAAMAPNYLTREDVPSDLVESERRIAEETAKAEGKPEAALTKIVEGRVTGFYKGEVLVDQAFAKDAKKSVAQILEEAGVKGTAFARFRVGS.

Residues 80 to 83 (TDFV) are involved in Mg(2+) ion dislocation from EF-Tu.

The protein belongs to the EF-Ts family.

It is found in the cytoplasm. Associates with the EF-Tu.GDP complex and induces the exchange of GDP to GTP. It remains bound to the aminoacyl-tRNA.EF-Tu.GTP complex up to the GTP hydrolysis stage on the ribosome. The chain is Elongation factor Ts from Pseudarthrobacter chlorophenolicus (strain ATCC 700700 / DSM 12829 / CIP 107037 / JCM 12360 / KCTC 9906 / NCIMB 13794 / A6) (Arthrobacter chlorophenolicus).